The primary structure comprises 363 residues: Phosphoserine aminotransferase (363 aa).

Arg-46 is an L-glutamate binding site. Pyridoxal 5'-phosphate contacts are provided by residues 80–81, Trp-106, Thr-156, Asp-176, and Gln-199; that span reads AT. Lys-200 carries the post-translational modification N6-(pyridoxal phosphate)lysine. 241-242 is a pyridoxal 5'-phosphate binding site; that stretch reads NT.

Belongs to the class-V pyridoxal-phosphate-dependent aminotransferase family. SerC subfamily. As to quaternary structure, homodimer. The cofactor is pyridoxal 5'-phosphate.

The protein resides in the cytoplasm. It catalyses the reaction O-phospho-L-serine + 2-oxoglutarate = 3-phosphooxypyruvate + L-glutamate. The catalysed reaction is 4-(phosphooxy)-L-threonine + 2-oxoglutarate = (R)-3-hydroxy-2-oxo-4-phosphooxybutanoate + L-glutamate. It participates in amino-acid biosynthesis; L-serine biosynthesis; L-serine from 3-phospho-D-glycerate: step 2/3. It functions in the pathway cofactor biosynthesis; pyridoxine 5'-phosphate biosynthesis; pyridoxine 5'-phosphate from D-erythrose 4-phosphate: step 3/5. In terms of biological role, catalyzes the reversible conversion of 3-phosphohydroxypyruvate to phosphoserine and of 3-hydroxy-2-oxo-4-phosphonooxybutanoate to phosphohydroxythreonine. The protein is Phosphoserine aminotransferase of Leptospira interrogans serogroup Icterohaemorrhagiae serovar copenhageni (strain Fiocruz L1-130).